The chain runs to 352 residues: N-terminal EF-hand calcium-binding protein 1 (352 aa).

Ser-4 carries the phosphoserine modification. EF-hand domains lie at 26-61 (KGMS…GVLS) and 60-95 (LSGE…HLGE). Ca(2+) is bound by residues Asp-39, Asn-41, Asp-43, Lys-45, and Glu-50. The stretch at 135–163 (LLKETLNQLQSLQNSLECAMETTEEQTRQ) forms a coiled coil. The tract at residues 155–202 (ETTEEQTRQERQGPSKPEVLSIQWPGKRSSRRVQRHNSFSPNSPQFNV) is disordered. Positions 190–202 (HNSFSPNSPQFNV) are enriched in polar residues. 2 positions are modified to phosphoserine: Ser-192 and Ser-197. Residues 209 to 275 (EEDNQWMTQI…EEFQLALKHY (67 aa)) are a coiled coil. An ABM domain is found at 252–340 (MLVQRQMSVT…LETPELTSTM (89 aa)).

In terms of assembly, interacts with STX1. May interact with CPNE6. In terms of tissue distribution, expressed in brain (at protein level). Expressed in the cerebral cortex only in layer 4, thalamic nuclei (the mediodorsal nucleus), hippocampus (a small band of pyramidal neurons at the boundary between CA1 and CA3), interneurons interspersed throughout the hippocampus proper, interneurons in the hilus, bodies of the neurons but also their dendritic projections (at protein level).

Its subcellular location is the cytoplasm. The chain is N-terminal EF-hand calcium-binding protein 1 (Necab1) from Mus musculus (Mouse).